The primary structure comprises 240 residues: Poxin (240 aa).

Residue His46 is the Proton donor of the active site. Tyr181 serves as the catalytic Shared with catalytic histidine of dimeric partner. Lys185 (proton acceptor; shared with catalytic histidine of dimeric partner) is an active-site residue.

This sequence belongs to the poxin family. As to quaternary structure, homodimer.

The enzyme catalyses 2',3'-cGAMP + H2O = Gp(2'-5')Ap(3') + H(+). In terms of biological role, nuclease that cleaves host 2',3'-cGAMP. This chain is Poxin (p26), found in Bombyx mori (Silk moth).